The sequence spans 295 residues: Probable protein phosphatase 2C 6 (295 aa).

The 272-residue stretch at 23 to 294 folds into the PPM-type phosphatase domain; the sequence is QYAATHMQGW…DNMTCILIQF (272 aa). Mn(2+) is bound by residues aspartate 57, glycine 58, aspartate 237, and aspartate 285.

Belongs to the PP2C family. Mg(2+) is required as a cofactor. The cofactor is Mn(2+).

The protein resides in the membrane. The enzyme catalyses O-phospho-L-seryl-[protein] + H2O = L-seryl-[protein] + phosphate. The catalysed reaction is O-phospho-L-threonyl-[protein] + H2O = L-threonyl-[protein] + phosphate. Functionally, enzyme with a broad specificity. This chain is Probable protein phosphatase 2C 6, found in Paramecium tetraurelia.